The sequence spans 345 residues: AA9 family lytic polysaccharide monooxygenase D (345 aa).

Residues Met1–Ala21 form the signal peptide. Residues His22 and His107 each coordinate Cu(2+). Cysteines 77 and 200 form a disulfide. Asn160 carries an N-linked (GlcNAc...) asparagine glycan. O2 is bound by residues His186 and Gln195. Tyr197 serves as a coordination point for Cu(2+). The tract at residues Val315 to Ala345 is disordered. Residues Ser318–Gln327 are compositionally biased toward polar residues. Residues Gly335–Ala345 show a composition bias toward basic residues.

This sequence belongs to the polysaccharide monooxygenase AA9 family. Requires Cu(2+) as cofactor.

It is found in the secreted. The enzyme catalyses [(1-&gt;4)-beta-D-glucosyl]n+m + reduced acceptor + O2 = 4-dehydro-beta-D-glucosyl-[(1-&gt;4)-beta-D-glucosyl]n-1 + [(1-&gt;4)-beta-D-glucosyl]m + acceptor + H2O.. Its function is as follows. Lytic polysaccharide monooxygenase (LPMO) that depolymerizes crystalline and amorphous polysaccharides via the oxidation of scissile alpha- or beta-(1-4)-glycosidic bonds, yielding C1 or C4 oxidation products. Catalysis by LPMOs requires the reduction of the active-site copper from Cu(II) to Cu(I) by a reducing agent and H(2)O(2) or O(2) as a cosubstrate. This chain is AA9 family lytic polysaccharide monooxygenase D, found in Podospora anserina (strain S / ATCC MYA-4624 / DSM 980 / FGSC 10383) (Pleurage anserina).